Consider the following 35-residue polypeptide: U2-agatoxin-Aop1a (35 aa).

Intrachain disulfides connect C3–C19, C10–C24, and C18–C34. L35 carries the leucine amide modification.

The protein belongs to the neurotoxin 01 (U2-agtx) family. As to expression, expressed by the venom gland.

The protein localises to the secreted. In terms of biological role, insect-selective toxin causing rapid but reversible paralysis in crickets. Suppresses the excitatory postsynaptic potentials evoked in lobster neuromuscular synaptic preparations, possibly by blocking the presynaptic calcium channel (Cav). Induces instantaneous reversible paralysis when injected into crickets. The protein is U2-agatoxin-Aop1a of Allagelena opulenta (Funnel weaving spider).